Consider the following 1436-residue polypeptide: DNA-directed RNA polymerase subunit beta' (1436 aa).

Zn(2+) contacts are provided by Cys-70, Cys-72, Cys-85, and Cys-88. The Mg(2+) site is built by Asp-481, Asp-483, and Asp-485. Cys-829, Cys-903, Cys-910, and Cys-913 together coordinate Zn(2+).

This sequence belongs to the RNA polymerase beta' chain family. As to quaternary structure, the RNAP catalytic core consists of 2 alpha, 1 beta, 1 beta' and 1 omega subunit. When a sigma factor is associated with the core the holoenzyme is formed, which can initiate transcription. Requires Mg(2+) as cofactor. The cofactor is Zn(2+).

The enzyme catalyses RNA(n) + a ribonucleoside 5'-triphosphate = RNA(n+1) + diphosphate. Its function is as follows. DNA-dependent RNA polymerase catalyzes the transcription of DNA into RNA using the four ribonucleoside triphosphates as substrates. The polypeptide is DNA-directed RNA polymerase subunit beta' (Flavobacterium johnsoniae (strain ATCC 17061 / DSM 2064 / JCM 8514 / BCRC 14874 / CCUG 350202 / NBRC 14942 / NCIMB 11054 / UW101) (Cytophaga johnsonae)).